The sequence spans 129 residues: Lysozyme C (129 aa).

The C-type lysozyme domain maps to 1 to 129; the sequence is KVYGRCELAA…VNAWTRGCRL (129 aa). 4 cysteine pairs are disulfide-bonded: Cys6–Cys127, Cys30–Cys115, Cys64–Cys80, and Cys76–Cys94. Residues Glu35 and Asp52 contribute to the active site.

The protein belongs to the glycosyl hydrolase 22 family. As to quaternary structure, monomer.

It is found in the secreted. The catalysed reaction is Hydrolysis of (1-&gt;4)-beta-linkages between N-acetylmuramic acid and N-acetyl-D-glucosamine residues in a peptidoglycan and between N-acetyl-D-glucosamine residues in chitodextrins.. Functionally, lysozymes have primarily a bacteriolytic function; those in tissues and body fluids are associated with the monocyte-macrophage system and enhance the activity of immunoagents. The sequence is that of Lysozyme C (LYZ) from Chrysolophus amherstiae (Lady Amherst's pheasant).